The following is a 1071-amino-acid chain: Serine/threonine-protein phosphatase 6 regulatory ankyrin repeat subunit C (1071 aa).

28 ANK repeats span residues 7-36 (SDQP…EVNA), 40-69 (ERRT…NVNA), 73-102 (VWLT…DVTA), 106-135 (YWQT…SLNM), 139-168 (TGRA…NLSA), 172-201 (KDRQ…DKSC), 205-234 (RGYT…EIDE), 238-267 (FGNT…NVNQ), 271-301 (RGYT…DVNM), 305-334 (EGKS…EIDC), 338-367 (YGNT…DTAR), 371-400 (HGMF…LYSI), 422-451 (FGRT…DMNK), 455-484 (FGRT…EVNE), 488-539 (SGCT…DPCL), 543-573 (KGYS…TLGD), 578-607 (GSIS…CVDV), 611-640 (VGRS…SCLL), 645-674 (SKWG…GADL), 681-710 (EGQT…CPDM), 714-743 (RGRT…SVLS), 747-776 (QGRS…HSQP), 784-814 (HGYT…SIQE), 816-845 (NPFT…CNSL), 852-881 (KGRT…DIDA), 885-915 (SGRS…DLSL), 919-951 (NKNT…LINA), and 955-984 (MLQM…TVLA).

Protein phosphatase 6 (PP6) holoenzyme is proposed to be a heterotrimeric complex formed by the catalytic subunit, a SAPS domain-containing subunit (PP6R) and an ankyrin repeat-domain containing regulatory subunit (ARS).

In terms of biological role, putative regulatory subunit of protein phosphatase 6 (PP6) that may be involved in the recognition of phosphoprotein substrates. This Danio rerio (Zebrafish) protein is Serine/threonine-protein phosphatase 6 regulatory ankyrin repeat subunit C (ankrd52).